Here is a 357-residue protein sequence, read N- to C-terminus: Probable cinnamyl alcohol dehydrogenase 1 (357 aa).

Cys47 lines the Zn(2+) pocket. Position 49 (Thr49) interacts with NADP(+). His69, Glu70, Cys100, Cys103, Cys106, Cys114, and Cys163 together coordinate Zn(2+). Residues Thr167, 188-193 (GLGGVG), 211-216 (SSSNKK), Thr251, Gly275, and 298-300 (SFI) contribute to the NADP(+) site.

Belongs to the zinc-containing alcohol dehydrogenase family. As to quaternary structure, homodimer. Requires Zn(2+) as cofactor. The N-terminus is blocked.

It catalyses the reaction (E)-cinnamyl alcohol + NADP(+) = (E)-cinnamaldehyde + NADPH + H(+). The catalysed reaction is (E)-coniferol + NADP(+) = (E)-coniferaldehyde + NADPH + H(+). The enzyme catalyses (E)-sinapyl alcohol + NADP(+) = (E)-sinapaldehyde + NADPH + H(+). It carries out the reaction (E)-4-coumaroyl alcohol + NADP(+) = (E)-4-coumaraldehyde + NADPH + H(+). It catalyses the reaction (E)-caffeyl alcohol + NADP(+) = (E)-caffeyl aldehyde + NADPH + H(+). Its pathway is aromatic compound metabolism; phenylpropanoid biosynthesis. Involved in lignin biosynthesis. Catalyzes the final step specific for the production of lignin monomers. Catalyzes the NADPH-dependent reduction of coniferaldehyde, 5-hydroxyconiferaldehyde, sinapaldehyde, 4-coumaraldehyde and caffeyl aldehyde to their respective alcohols. The sequence is that of Probable cinnamyl alcohol dehydrogenase 1 from Nicotiana tabacum (Common tobacco).